The primary structure comprises 146 residues: 3-dehydroquinate dehydratase (146 aa).

Tyr23 serves as the catalytic Proton acceptor. Substrate contacts are provided by Asn74, His80, and Asp87. Catalysis depends on His100, which acts as the Proton donor. Residues 101 to 102 (IS) and Arg111 each bind substrate.

Belongs to the type-II 3-dehydroquinase family. Homododecamer.

It catalyses the reaction 3-dehydroquinate = 3-dehydroshikimate + H2O. Its pathway is metabolic intermediate biosynthesis; chorismate biosynthesis; chorismate from D-erythrose 4-phosphate and phosphoenolpyruvate: step 3/7. Catalyzes a trans-dehydration via an enolate intermediate. The polypeptide is 3-dehydroquinate dehydratase (Bacillus cereus (strain B4264)).